The following is a 171-amino-acid chain: uncharacterized protein (171 aa).

Belongs to the mimivirus R24/R907 family.

This is an uncharacterized protein from Acanthamoeba polyphaga (Amoeba).